Here is a 258-residue protein sequence, read N- to C-terminus: C1q-related factor (258 aa).

The N-terminal stretch at 1-16 (MLLVLVVLIPVLVSSG) is a signal peptide. A disordered region spans residues 39–120 (GPGAGARSDG…PGSGGSGAIS (82 aa)). Low complexity predominate over residues 67–77 (GPQGKPGRTGK). In terms of domain architecture, Collagen-like spans 67–115 (GPQGKPGRTGKPGPPGPPGDRGPPGPVGPPGEKGEPGKPGPPGLPGSGG). Residues 78-95 (PGPPGPPGDRGPPGPVGP) are compositionally biased toward pro residues. Residues 125-258 (TTVPRVAFYA…TFSGFIIYSD (134 aa)) enclose the C1q domain.

In terms of assembly, interacts with ADGRB3. Forms heterooligomers with C1QL4, when proteins are coexpressed; this interaction does not occur after secretion. In terms of tissue distribution, expressed in brainstem. More abundant in areas of the nervous system involved in motor function, such as the Purkinje cells of the cerebellum, the accessory olivary nucleus, the pons and the red nucleus.

The protein resides in the secreted. May regulate the number of excitatory synapses that are formed on hippocampus neurons. Has no effect on inhibitory synapses. In Mus musculus (Mouse), this protein is C1q-related factor (C1ql1).